We begin with the raw amino-acid sequence, 485 residues long: NADH-quinone oxidoreductase subunit N (485 aa).

Helical transmembrane passes span 8-28 (LIALLPLLIVGLTVVVVMLSI), 35-55 (FLNATLSVIGLNAALVSLWFV), 71-91 (GFAMLYTGLVLLASLATCTFA), 105-125 (FYLLVLIAALGGILLANANHL), 127-147 (SLFLGIELISLPLFGLVGYAF), 159-179 (YTILSAAASSFLLFGMALVYA), 203-223 (LLAGFGMMIVGLGFKLSLVPF), 235-255 (PAPVSTFLATASKIAIFGVVM), 271-291 (VVLAIIAFASIIFGNLMALSQ), 297-317 (LLGYSSISHLGYLLVALIALQ), 326-346 (VGGYLAGYLFSSLGAFGVVSL), 373-393 (AAVMTVMMLSLAGIPMTLGFI), 408-430 (WWLVGAVVVGSAIGLYYYLRVAV), and 455-475 (IVVLISALLVLVLGVWPQPLI).

Belongs to the complex I subunit 2 family. As to quaternary structure, NDH-1 is composed of 13 different subunits. Subunits NuoA, H, J, K, L, M, N constitute the membrane sector of the complex.

It is found in the cell inner membrane. It carries out the reaction a quinone + NADH + 5 H(+)(in) = a quinol + NAD(+) + 4 H(+)(out). Functionally, NDH-1 shuttles electrons from NADH, via FMN and iron-sulfur (Fe-S) centers, to quinones in the respiratory chain. The immediate electron acceptor for the enzyme in this species is believed to be ubiquinone. Couples the redox reaction to proton translocation (for every two electrons transferred, four hydrogen ions are translocated across the cytoplasmic membrane), and thus conserves the redox energy in a proton gradient. The chain is NADH-quinone oxidoreductase subunit N from Shigella boydii serotype 18 (strain CDC 3083-94 / BS512).